The following is a 57-amino-acid chain: MICYNQQSSEPPTTKTCSEGQCYKKTWSDHRGTIIERGCACPNVKPGVKISCCSSDK.

3 disulfides stabilise this stretch: C3–C22, C17–C39, and C41–C52.

As to expression, expressed by the venom gland.

It localises to the secreted. Produces peripheral paralysis by blocking neuromuscular transmission at the postsynaptic site. Binds to and inhibits the endogenous nicotinic acetylcholine receptors (nAChR). This neurotoxin is lethal to mice by intraperitoneal or intravenous injection. In Micrurus tschudii (Desert coral snake), this protein is Three-finger toxin Tschuditoxin-I.